We begin with the raw amino-acid sequence, 286 residues long: 2-dehydro-3-deoxyphosphooctonate aldolase (286 aa).

Belongs to the KdsA family.

It is found in the cytoplasm. It catalyses the reaction D-arabinose 5-phosphate + phosphoenolpyruvate + H2O = 3-deoxy-alpha-D-manno-2-octulosonate-8-phosphate + phosphate. It functions in the pathway carbohydrate biosynthesis; 3-deoxy-D-manno-octulosonate biosynthesis; 3-deoxy-D-manno-octulosonate from D-ribulose 5-phosphate: step 2/3. The protein operates within bacterial outer membrane biogenesis; lipopolysaccharide biosynthesis. This is 2-dehydro-3-deoxyphosphooctonate aldolase from Shewanella denitrificans (strain OS217 / ATCC BAA-1090 / DSM 15013).